We begin with the raw amino-acid sequence, 342 residues long: Putative glycosyltransferases (342 aa).

2 helical membrane-spanning segments follow: residues 227 to 247 (IFYLGAAIFIISSSAAGYLII) and 262 to 282 (VIVSIWMLGGVTIFCIGLVGI).

It belongs to the glycosyltransferase 2 family.

It is found in the cell membrane. In terms of biological role, may play only a redundant role in maintaining cell wall viability and bacterial virulence. The protein is Putative glycosyltransferases (pimF) of Mycobacterium tuberculosis (strain CDC 1551 / Oshkosh).